The following is an 81-amino-acid chain: Photosystem I iron-sulfur center (81 aa).

4Fe-4S ferredoxin-type domains are found at residues 2 to 31 and 39 to 68; these read SHIV…MVPW and MASA…VRVY. Residues Cys11, Cys14, Cys17, Cys21, Cys48, Cys51, Cys54, and Cys58 each coordinate [4Fe-4S] cluster.

In terms of assembly, the eukaryotic PSI reaction center is composed of at least 11 subunits. The cofactor is [4Fe-4S] cluster.

It is found in the plastid. The protein resides in the chloroplast thylakoid membrane. It carries out the reaction reduced [plastocyanin] + hnu + oxidized [2Fe-2S]-[ferredoxin] = oxidized [plastocyanin] + reduced [2Fe-2S]-[ferredoxin]. Its function is as follows. Apoprotein for the two 4Fe-4S centers FA and FB of photosystem I (PSI); essential for photochemical activity. FB is the terminal electron acceptor of PSI, donating electrons to ferredoxin. The C-terminus interacts with PsaA/B/D and helps assemble the protein into the PSI complex. Required for binding of PsaD and PsaE to PSI. PSI is a plastocyanin/cytochrome c6-ferredoxin oxidoreductase, converting photonic excitation into a charge separation, which transfers an electron from the donor P700 chlorophyll pair to the spectroscopically characterized acceptors A0, A1, FX, FA and FB in turn. This Stigeoclonium helveticum (Green alga) protein is Photosystem I iron-sulfur center.